A 367-amino-acid chain; its full sequence is Undecaprenyl-phosphate alpha-N-acetylglucosaminyl 1-phosphate transferase (367 aa).

9 helical membrane passes run 3–23 (LLTALSELISIFLFTTIFIFL), 45–65 (GVIPLVGGISVFAGICFMFGL), 69–89 (YIPHLSLYLICAGVLVFVGAM), 129–149 (WELVLGPFGYFLTLFAVWAAI), 158–178 (IDGLLGGLSSVSFAAMGLILW), 187–207 (MWCFAMIAAILPYIMLNLGIL), 213–233 (VFMGDAGSTLIGFTVIWLLLE), 242–262 (ISPVTALWIIAIPLMDMVAIM), and 318–338 (VPEWVMLVLFLLAFFLYGYCI).

Belongs to the glycosyltransferase 4 family. WecA subfamily. Mg(2+) is required as a cofactor. The cofactor is Mn(2+).

The protein localises to the cell inner membrane. The catalysed reaction is di-trans,octa-cis-undecaprenyl phosphate + UDP-N-acetyl-alpha-D-glucosamine = N-acetyl-alpha-D-glucosaminyl-di-trans,octa-cis-undecaprenyl diphosphate + UMP. The protein operates within bacterial outer membrane biogenesis; LPS O-antigen biosynthesis. It participates in bacterial outer membrane biogenesis; enterobacterial common antigen biosynthesis. Its function is as follows. Catalyzes the transfer of the GlcNAc-1-phosphate moiety from UDP-GlcNAc onto the carrier lipid undecaprenyl phosphate (C55-P), yielding GlcNAc-pyrophosphoryl-undecaprenyl (GlcNAc-PP-C55). In Salmonella typhi, this protein is Undecaprenyl-phosphate alpha-N-acetylglucosaminyl 1-phosphate transferase.